Here is a 317-residue protein sequence, read N- to C-terminus: Transaldolase (317 aa).

Lysine 132 functions as the Schiff-base intermediate with substrate in the catalytic mechanism.

The protein belongs to the transaldolase family. Type 1 subfamily. In terms of assembly, homodimer.

The protein resides in the cytoplasm. The catalysed reaction is D-sedoheptulose 7-phosphate + D-glyceraldehyde 3-phosphate = D-erythrose 4-phosphate + beta-D-fructose 6-phosphate. The protein operates within carbohydrate degradation; pentose phosphate pathway; D-glyceraldehyde 3-phosphate and beta-D-fructose 6-phosphate from D-ribose 5-phosphate and D-xylulose 5-phosphate (non-oxidative stage): step 2/3. Functionally, transaldolase is important for the balance of metabolites in the pentose-phosphate pathway. The sequence is that of Transaldolase from Histophilus somni (strain 2336) (Haemophilus somnus).